Reading from the N-terminus, the 62-residue chain is Photosystem II reaction center protein Z (62 aa).

Transmembrane regions (helical) follow at residues 8–28 and 41–61; these read AVFA…VVFA and FSGT…NSLI.

Belongs to the PsbZ family. As to quaternary structure, PSII is composed of 1 copy each of membrane proteins PsbA, PsbB, PsbC, PsbD, PsbE, PsbF, PsbH, PsbI, PsbJ, PsbK, PsbL, PsbM, PsbT, PsbY, PsbZ, Psb30/Ycf12, at least 3 peripheral proteins of the oxygen-evolving complex and a large number of cofactors. It forms dimeric complexes.

Its subcellular location is the plastid. It localises to the chloroplast thylakoid membrane. In terms of biological role, may control the interaction of photosystem II (PSII) cores with the light-harvesting antenna, regulates electron flow through the 2 photosystem reaction centers. PSII is a light-driven water plastoquinone oxidoreductase, using light energy to abstract electrons from H(2)O, generating a proton gradient subsequently used for ATP formation. This is Photosystem II reaction center protein Z from Pisum sativum (Garden pea).